Reading from the N-terminus, the 452-residue chain is Prenyltransferase fsdK (452 aa).

Belongs to the tryptophan dimethylallyltransferase family.

Its pathway is mycotoxin biosynthesis. Functionally, prenyltransferase; part of the gene cluster that mediates the biosynthesis of fusaridione A, a bright yellow trans-fused decalin-containing tetramic acid with antimicrobial activity. The PKS module of fsdS catalyzes the formation of the polyketide unit which is then conjugated to L-tyrosine by the condensation domain of the fsdS NRPS module. Activity of the Dieckmann cyclase domain (RED) results in release of the intermediate fusaridione A. The unstable pyrrolidinedione ring of fusaridione A is opened through a reverse-Dieckmann reaction to afford its ring-opened form. The sequence is that of Prenyltransferase fsdK from Fusarium heterosporum.